The primary structure comprises 589 residues: ATP-dependent lipid A-core flippase (589 aa).

5 consecutive transmembrane segments (helical) span residues 29 to 49, 68 to 88, 157 to 177, 254 to 274, and 283 to 303; these read WLLV…STFL, ALWL…AGYI, VIGA…AILL, ISSA…LLIA, and LSPG…PALK. One can recognise an ABC transmembrane type-1 domain in the interval 32–314; that stretch reads VVAACGALLE…LTNVQNMLQS (283 aa). The ABC transporter domain occupies 346–582; the sequence is IEFRGITARY…DGLYAYLYSM (237 aa). 380-387 is a binding site for ATP; that stretch reads GRSGSGKS.

The protein belongs to the ABC transporter superfamily. Lipid exporter (TC 3.A.1.106) family. Homodimer.

It is found in the cell inner membrane. The enzyme catalyses ATP + H2O + lipid A-core oligosaccharideSide 1 = ADP + phosphate + lipid A-core oligosaccharideSide 2.. In terms of biological role, involved in lipopolysaccharide (LPS) biosynthesis. Translocates lipid A-core from the inner to the outer leaflet of the inner membrane. Transmembrane domains (TMD) form a pore in the inner membrane and the ATP-binding domain (NBD) is responsible for energy generation. The sequence is that of ATP-dependent lipid A-core flippase from Xylella fastidiosa (strain Temecula1 / ATCC 700964).